Here is a 1460-residue protein sequence, read N- to C-terminus: Nucleoporin NUP159 (1460 aa).

The interaction with DBP5 stretch occupies residues 1 to 500; sequence MSSLKDEVPT…SEQDATDPAS (500 aa). The stretch at 228 to 231 is one FG 1 repeat; that stretch reads AVFG. The PXFG 1 repeat unit spans residues 267-270; it reads PPFG. The segment at 401–435 is disordered; it reads KSLSPTSEKIPIAGQEQEEKKKNNESSKALSENPF. Serine 404 carries the post-translational modification Phosphoserine. The SXFGXPXFG 1 repeat unit spans residues 462 to 470; the sequence is STFGAPSFG. Positions 483–504 are disordered; that stretch reads STSTGVASSEQDATDPASAKPV. The segment at 497 to 701 is interactions with CRM1 and GLE1; it reads DPASAKPVFG…KPNTSTKPKT (205 aa). The stretch at 503–511 is one SXFGXPXFG 2; approximate repeat; it reads PVFGKPAFG. The SXFGXPXFG 3; approximate repeat unit spans residues 522-530; the sequence is YAFGKPSFG. One copy of the PXFG 2 repeat lies at 532–535; sequence PSFG. A disordered region spans residues 533 to 619; the sequence is SFGSGKSSVE…SAFGTASSNE (87 aa). Composition is skewed to polar residues over residues 536–546, 556–567, 582–593, and 607–619; these read SGKSSVESPAS, GTPSFGSGNSSV, GTPSFGSGNSSA, and FGTSAFGTASSNE. One copy of the SXFGXPXFG 4 repeat lies at 548–556; it reads SAFGKPSFG. The stretch at 558 to 561 is one PXFG 3 repeat; it reads PSFG. One copy of the SXFGXPXFG 5 repeat lies at 574-582; the sequence is SAFGKPSFG. A PXFG 4 repeat occupies 584-587; sequence PSFG. An SXFGXPXFG 6 repeat occupies 600–608; that stretch reads SAFGKPSFG. One copy of the SXFG 1 repeat lies at 610-613; it reads SAFG. The stretch at 624–632 is one SXFGXPXFG 7; approximate repeat; that stretch reads SIFGKAAFG. Residues 642 to 645 form an FG 2 repeat; the sequence is ELFG. A disordered region spans residues 647 to 704; that stretch reads NFTISKPTVDSPKEVDSTSPFPSSGDQSEDESKSDVDSSSTPFGTKPNTSTKPKTNAF. Serine 657 bears the Phosphoserine mark. Over residues 683 to 704 the composition is skewed to low complexity; it reads DSSSTPFGTKPNTSTKPKTNAF. The stretch at 687 to 690 is one FG 3 repeat; the sequence is TPFG. An FXFG 1 repeat occupies 704–707; sequence FDFG. Residues 709 to 712 form an SXFG 2 repeat; it reads SSFG. A Phosphoserine modification is found at serine 724. Composition is skewed to polar residues over residues 727–750, 757–767, and 778–800; these read TFKFGTQASPFSSQLGNKSPFSSF, NGSLSKGSTSE, and NGPNVSGNDLTDSTVEQTSSTRL. Residues 727–824 are disordered; it reads TFKFGTQASP…EAQKSPIGKL (98 aa). An FXFG 2 repeat occupies 728–731; sequence FKFG. Residues serine 735 and serine 745 each carry the phosphoserine modification. Position 803 is a phosphothreonine (threonine 803). A compositionally biased stretch (acidic residues) spans 804 to 814; it reads PSDEDGEVVEE. Phosphoserine occurs at positions 805 and 819. A PXFG 5 repeat occupies 842–845; sequence PVFG. Positions 861–889 are enriched in polar residues; it reads TNITKPSSTTPAFSFGNSTMNKSNTSTVS. The disordered stretch occupies residues 861-1092; sequence TNITKPSSTT…DINTDELPHG (232 aa). One copy of the FXFG 3 repeat lies at 873 to 876; that stretch reads FSFG. Serine 889 carries the phosphoserine modification. Over residues 917–936 the composition is skewed to basic and acidic residues; sequence AKEERTGESSKKDHNDDPKD. Serine 940 bears the Phosphoserine mark. Residues 942–958 show a composition bias toward polar residues; the sequence is SEISVRTSESAFDTTAN. Basic and acidic residues-rich tracts occupy residues 960-1002, 1017-1027, 1035-1061, and 1068-1092; these read EIPK…KNNE, ALKKDNEKENF, QFEDHQSSEEDASEKDSRQSSEVKESD, and SDRDESISESYDKLEDINTDELPHG. Positions 1086-1175 are interaction with DYN2; it reads TDELPHGGEA…TCNFSVQTFE (90 aa). The tract at residues 1223–1460 is interaction with NUP82; sequence AEFTVLMENI…DFFKNLNMAK (238 aa). Coiled coils occupy residues 1279-1320 and 1383-1418; these read EQMQ…YLFL and AKLAKESLARDGLLKEIKLLREQVSRLQLEEKGKKA.

Component of the nuclear pore complex (NPC). NPC constitutes the exclusive means of nucleocytoplasmic transport. NPCs allow the passive diffusion of ions and small molecules and the active, nuclear transport receptor-mediated bidirectional transport of macromolecules such as proteins, RNAs, ribonucleoparticles (RNPs), and ribosomal subunits across the nuclear envelope. Due to its 8-fold rotational symmetry, all subunits are present with 8 copies or multiples thereof. Part of the NUP82 subcomplex, interacts with NUP82 through its C-terminal coiled coil. This subcomplex is the base for interactions with NUP116 and GLE2, with NUP42 and GLE1 and with DYN2. Interacts directly with DYN2. Interacts through its FG repeats with karyopherins, such as heterodimeric mRNA transport factor MEX67/MTR2, CRM1 (XPO1), and PSE1 (GSP1-GDP dependent). Interaction with CRM1 (XPO1) is GSP1-GTP dependent and stimulated by RNA1. NUP159 also interacts with GLE1 and the ATP-dependent RNA helicase DBP5.

It is found in the nucleus. The protein localises to the nuclear pore complex. The protein resides in the nucleus membrane. Functions as a component of the nuclear pore complex (NPC). NPC components, collectively referred to as nucleoporins (NUPs), can play the role of both NPC structural components and of docking or interaction partners for transiently associated nuclear transport factors. Active directional transport is assured by both, a Phe-Gly (FG) repeat affinity gradient for these transport factors across the NPC and a transport cofactor concentration gradient across the nuclear envelope (GSP1 and GSP2 GTPases associated predominantly with GTP in the nucleus, with GDP in the cytoplasm). NUP159 plays an important role in several nuclear export pathways including poly(A)+ RNA, pre-ribosome, and protein export. The sequence is that of Nucleoporin NUP159 (NUP159) from Saccharomyces cerevisiae (strain ATCC 204508 / S288c) (Baker's yeast).